Consider the following 289-residue polypeptide: Ribonuclease H2 subunit A (289 aa).

The 230-residue stretch at 20–249 (PFVMGIDEAG…TETAMRGACF (230 aa)) folds into the RNase H type-2 domain. Aspartate 26, glutamate 27, and aspartate 134 together coordinate a divalent metal cation.

This sequence belongs to the RNase HII family. Eukaryotic subfamily. Mn(2+) serves as cofactor. Requires Mg(2+) as cofactor.

It carries out the reaction Endonucleolytic cleavage to 5'-phosphomonoester.. Endonuclease that specifically degrades the RNA of RNA-DNA hybrids. Participates in DNA replication. This is Ribonuclease H2 subunit A (rnaseh2A) from Dictyostelium discoideum (Social amoeba).